The primary structure comprises 78 residues: Large ribosomal subunit protein bL28 (78 aa).

The segment at 1–22 is disordered; that stretch reads MAKVCQVTGKRPVTGHNVSHAK.

Belongs to the bacterial ribosomal protein bL28 family.

This Saccharophagus degradans (strain 2-40 / ATCC 43961 / DSM 17024) protein is Large ribosomal subunit protein bL28.